The primary structure comprises 141 residues: Putative antiporter subunit mnhB2 (141 aa).

A run of 4 helical transmembrane segments spans residues 10 to 30 (TVTK…FLAG), 35 to 55 (GGGF…FLAF), 70 to 90 (ILMI…MFFG), and 116 to 136 (VFEA…MLSI).

This sequence belongs to the CPA3 antiporters (TC 2.A.63) subunit B family. May form a heterooligomeric complex that consists of seven subunits: mnhA2, mnhB2, mnhC2, mnhD2, mnhE2, mnhF2 and mnhG2.

It localises to the cell membrane. The polypeptide is Putative antiporter subunit mnhB2 (mnhB2) (Staphylococcus saprophyticus subsp. saprophyticus (strain ATCC 15305 / DSM 20229 / NCIMB 8711 / NCTC 7292 / S-41)).